The following is a 406-amino-acid chain: Eukaryotic initiation factor 4A-I (406 aa).

The segment at 1–21 is disordered; the sequence is MSASQDSRSRDNGPDGMEPEG. N-acetylserine is present on Ser2. Phosphoserine is present on Ser4. Positions 32 to 60 match the Q motif motif; that stretch reads DSFDDMNLSESLLRGIYAYGFEKPSAIQQ. The Helicase ATP-binding domain occupies 63–234; sequence ILPCIKGYDV…KKFMRDPIRI (172 aa). Position 76–83 (76–83) interacts with ATP; that stretch reads AQSGTGKT. Residue Lys118 is modified to N6-acetyllysine. Residue Lys146 forms a Glycyl lysine isopeptide (Lys-Gly) (interchain with G-Cter in SUMO2) linkage. Thr158 is modified (phosphothreonine). Residue Lys174 is modified to N6-acetyllysine. Positions 182-185 match the DEAD box motif; that stretch reads DEAD. Lys193 is subject to N6-acetyllysine. Residue Lys225 forms a Glycyl lysine isopeptide (Lys-Gly) (interchain with G-Cter in SUMO2) linkage. At Lys238 the chain carries N6-acetyllysine; alternate. A Glycyl lysine isopeptide (Lys-Gly) (interchain with G-Cter in SUMO2); alternate cross-link involves residue Lys238. The Helicase C-terminal domain occupies 245–406; the sequence is GIRQFYINVE…EMPLNVADLI (162 aa). Residues Lys309, Lys369, and Lys381 each participate in a glycyl lysine isopeptide (Lys-Gly) (interchain with G-Cter in SUMO2) cross-link.

Belongs to the DEAD box helicase family. eIF4A subfamily. As to quaternary structure, eIF4F is a multi-subunit complex, the composition of which varies with external and internal environmental conditions. It is composed of at least EIF4A, EIF4E and EIF4G1/EIF4G3. Interacts with PAIP1, EIF4E and UPF2. Found in a complex with XPO7, EIF4A1, ARHGAP1, VPS26A, VPS29, VPS35 and SFN. May interact with NOM1. Interacts with PDCD4; this interferes with the interaction between EIF4A and EIF4G. Interacts with RBM4. Interacts with DDX3X in an RNA-independent manner. Interacts with PKP1 (via N-terminus); the interaction promotes EIF4A1 recruitment to the cap-dependent translation complex and EIF4A1 ATPase activity.

It localises to the cytoplasm. The protein localises to the perinuclear region. The protein resides in the cell membrane. It is found in the stress granule. It carries out the reaction ATP + H2O = ADP + phosphate + H(+). Its function is as follows. ATP-dependent RNA helicase which is a subunit of the eIF4F complex involved in cap recognition and is required for mRNA binding to ribosome. In the current model of translation initiation, eIF4A unwinds RNA secondary structures in the 5'-UTR of mRNAs which is necessary to allow efficient binding of the small ribosomal subunit, and subsequent scanning for the initiator codon. As a result, promotes cell proliferation and growth. This Bos taurus (Bovine) protein is Eukaryotic initiation factor 4A-I (EIF4A1).